A 238-amino-acid chain; its full sequence is Purine nucleoside phosphorylase DeoD-type (238 aa).

Histidine 4 lines the a purine D-ribonucleoside pocket. Phosphate contacts are provided by residues glycine 20, arginine 24, arginine 43, and 87 to 90 (RIGS). A purine D-ribonucleoside is bound by residues 181-183 (EME) and 205-206 (SD). Aspartate 206 functions as the Proton donor in the catalytic mechanism.

It belongs to the PNP/UDP phosphorylase family. In terms of assembly, homohexamer; trimer of homodimers.

The catalysed reaction is a purine D-ribonucleoside + phosphate = a purine nucleobase + alpha-D-ribose 1-phosphate. It carries out the reaction a purine 2'-deoxy-D-ribonucleoside + phosphate = a purine nucleobase + 2-deoxy-alpha-D-ribose 1-phosphate. Catalyzes the reversible phosphorolytic breakdown of the N-glycosidic bond in the beta-(deoxy)ribonucleoside molecules, with the formation of the corresponding free purine bases and pentose-1-phosphate. This is Purine nucleoside phosphorylase DeoD-type from Mycoplasma pneumoniae (strain ATCC 29342 / M129 / Subtype 1) (Mycoplasmoides pneumoniae).